Consider the following 93-residue polypeptide: DNA-binding protein Fis (93 aa).

Positions 74 to 93 (QTRAAQMMGINRGTLRKKLK) form a DNA-binding region, H-T-H motif.

The protein belongs to the transcriptional regulatory Fis family. In terms of assembly, homodimer.

Functionally, activates ribosomal RNA transcription. Plays a direct role in upstream activation of rRNA promoters. The protein is DNA-binding protein Fis of Proteus vulgaris.